Consider the following 329-residue polypeptide: UDP-2,3-diacylglucosamine pyrophosphatase LpxG (329 aa).

Residues 2–24 (FVFVGSTVSLTAIVAAPVLTWIW) form a helical membrane-spanning segment. Residues Asp59, His61, Asp91, Asn123, His257, and His259 each contribute to the a divalent metal cation site.

This sequence belongs to the metallophosphoesterase superfamily. It depends on Mn(2+) as a cofactor.

It localises to the cell inner membrane. The enzyme catalyses UDP-2,3-diacyl-alpha-D-glucosamine + H2O = 2,3-diacyl-alpha-D-glucosaminyl 1-phosphate + UMP + 2 H(+). The protein operates within glycolipid biosynthesis; lipid IV(A) biosynthesis. In terms of biological role, hydrolyzes the pyrophosphate bond of UDP-2,3-diacylglucosamine to form 2,3-diacylglucosamine 1-phosphate (lipid X) and UMP by catalyzing the attack of water at the alpha-P atom. Involved in the biosynthesis of lipid A, a phosphorylated glycolipid that anchors the lipooligosaccharide (LOS) to the outer membrane of the cell. The protein is UDP-2,3-diacylglucosamine pyrophosphatase LpxG of Chlamydia muridarum (strain MoPn / Nigg).